The primary structure comprises 248 residues: Ribosomal RNA small subunit methyltransferase J (248 aa).

S-adenosyl-L-methionine-binding positions include 98-99 (RD), 114-115 (ER), 150-151 (SS), and Asp168.

It belongs to the methyltransferase superfamily. RsmJ family.

The protein localises to the cytoplasm. The enzyme catalyses guanosine(1516) in 16S rRNA + S-adenosyl-L-methionine = N(2)-methylguanosine(1516) in 16S rRNA + S-adenosyl-L-homocysteine + H(+). Specifically methylates the guanosine in position 1516 of 16S rRNA. This is Ribosomal RNA small subunit methyltransferase J from Shewanella denitrificans (strain OS217 / ATCC BAA-1090 / DSM 15013).